We begin with the raw amino-acid sequence, 780 residues long: ATP-dependent 6-phosphofructokinase, liver type (780 aa).

An N-acetylalanine modification is found at A2. The N-terminal catalytic PFK domain 1 stretch occupies residues 2-390 (ATVDLEKLRM…NWKIYKLLAH (389 aa)). ATP-binding positions include G25, 88 to 89 (RC), and 118 to 121 (GDGS). D119 contributes to the Mg(2+) binding site. Substrate-binding positions include 164–166 (SID), R201, 208–210 (MGR), E264, R292, and 298–301 (HVQR). Catalysis depends on D166, which acts as the Proton acceptor. Residue S377 is modified to Phosphoserine. An interdomain linker region spans residues 391-400 (QKVSKEKSNF). Residues 401-780 (SLAILNVGAP…RRTLSIDKGF (380 aa)) form a C-terminal regulatory PFK domain 2 region. Beta-D-fructose 2,6-bisphosphate is bound by residues R470, 527 to 531 (TISNN), R565, 572 to 574 (MGG), and E628. S529 carries O-linked (GlcNAc) serine glycosylation. Y640 is subject to Phosphotyrosine. Beta-D-fructose 2,6-bisphosphate contacts are provided by residues R654, 660–663 (HLQQ), and R734. A Phosphoserine modification is found at S775.

Belongs to the phosphofructokinase type A (PFKA) family. ATP-dependent PFK group I subfamily. Eukaryotic two domain clade 'E' sub-subfamily. In terms of assembly, homo- and heterotetramers. Phosphofructokinase (PFK) enzyme functions as a tetramer composed of different combinations of 3 types of subunits, called PFKM (M), PFKL (L) and PFKP (P). The composition of the PFK tetramer differs according to the tissue type it is present in. The kinetic and regulatory properties of the tetrameric enzyme are dependent on the subunit composition, hence can vary across tissues. The cofactor is Mg(2+). In terms of processing, glcNAcylation at Ser-529 by OGT decreases enzyme activity, leading to redirect glucose flux through the oxidative pentose phosphate pathway. Glycosylation is stimulated by both hypoxia and glucose deprivation.

Its subcellular location is the cytoplasm. The enzyme catalyses beta-D-fructose 6-phosphate + ATP = beta-D-fructose 1,6-bisphosphate + ADP + H(+). The protein operates within carbohydrate degradation; glycolysis; D-glyceraldehyde 3-phosphate and glycerone phosphate from D-glucose: step 3/4. With respect to regulation, allosterically activated by ADP, AMP, or fructose 2,6-bisphosphate, and allosterically inhibited by ATP or citrate. GlcNAcylation by OGT overcomes allosteric regulation. In terms of biological role, catalyzes the phosphorylation of D-fructose 6-phosphate to fructose 1,6-bisphosphate by ATP, the first committing step of glycolysis. Negatively regulates the phagocyte oxidative burst in response to bacterial infection by controlling cellular NADPH biosynthesis and NADPH oxidase-derived reactive oxygen species. Upon macrophage activation, drives the metabolic switch toward glycolysis, thus preventing glucose turnover that produces NADPH via pentose phosphate pathway. This is ATP-dependent 6-phosphofructokinase, liver type (Pfkl) from Rattus norvegicus (Rat).